We begin with the raw amino-acid sequence, 423 residues long: Zinc transporter ZIP13 (423 aa).

At Met-1 to Arg-15 the chain is on the lumenal side. A helical transmembrane segment spans residues Leu-16–Ala-36. Topologically, residues Leu-37–Trp-68 are cytoplasmic. A helical membrane pass occupies residues Ile-69–Ile-89. Residues Pro-90–Gln-108 lie on the Lumenal side of the membrane. Residues Leu-109–Ala-129 form a helical membrane-spanning segment. The Cytoplasmic segment spans residues Trp-130 to Gln-149. Residues Gln-150 to Phe-170 traverse the membrane as a helical segment. Residues Asp-171–Ala-235 are Lumenal-facing. Residues Val-236–Leu-256 traverse the membrane as a helical segment. Residues His-257–Glu-262 carry the XEXPHE-motif motif. Residues His-257–Ser-278 lie on the Cytoplasmic side of the membrane. Residues Ala-279–Cys-299 traverse the membrane as a helical segment. Residues Ala-300 to Thr-368 lie on the Lumenal side of the membrane. Residues Val-369 to Leu-389 form a helical membrane-spanning segment. Topologically, residues Pro-390–Ser-401 are cytoplasmic. Residues Leu-402 to Val-422 traverse the membrane as a helical segment. Position 423 (Glu-423) is a topological domain, lumenal.

The protein belongs to the ZIP transporter (TC 2.A.5) family. In terms of assembly, homodimer.

The protein localises to the golgi apparatus membrane. The protein resides in the cytoplasmic vesicle membrane. It localises to the endoplasmic reticulum membrane. It carries out the reaction Zn(2+)(in) = Zn(2+)(out). Its function is as follows. Functions as a zinc transporter transporting Zn(2+) from the Golgi apparatus to the cytosol and thus influences the zinc level at least in areas of the cytosol. May regulate beige adipocyte differentiation. In Bos taurus (Bovine), this protein is Zinc transporter ZIP13.